We begin with the raw amino-acid sequence, 116 residues long: MTNKIIQQLEAEQMSKEIPTFAPGDTVVVQVKVKEGDRSRLQAFEGVVIAKRNRGLNSAFTVRKISSGVGVERTFQTYSPQIDSLAVKRRGDVRKAKLYYLRDLSGKAARIKEKLS.

Belongs to the bacterial ribosomal protein bL19 family.

This protein is located at the 30S-50S ribosomal subunit interface and may play a role in the structure and function of the aminoacyl-tRNA binding site. The sequence is that of Large ribosomal subunit protein bL19 from Pseudomonas entomophila (strain L48).